The sequence spans 130 residues: Small ribosomal subunit protein uS9 (130 aa).

It belongs to the universal ribosomal protein uS9 family.

The protein is Small ribosomal subunit protein uS9 of Buchnera aphidicola subsp. Baizongia pistaciae (strain Bp).